The following is a 471-amino-acid chain: MPAASDKPVVTRFAPSPTGYLHIGGGRTALFNWLYARGRKGTFLLRIEDTDRERSTPEATDAILRGLTWLGLDWDGEVVSQFARKDRHAEVAREMLERGAAYKCFSTQEEIEAFRESARAEGRSTLFRSPWRDADPTSHPDAPFVIRMKAPRSGETVIEDEVQGTVRFQNETLDDMVVLRSDGTPTYMLAVVVDDHDMGVTHVIRGDDHLNNAARQTMVYEAMGWEVPVWAHIPLIHGPDGKKLSKRHGALGVEEYQAMGYPAAGMRNYLARLGWSHGDDEFFTSEQAMDWFDLGGIGRSPARLDFKKLESVCGQHIAVMEDAELMREIAAYLAAARKPALTDLQAARLEKGLYALKDRAKTFPELLEKARFALESRPIVADDAAAKALDPVSRGILRELTPMLQAASWSKQDLEAILTAFASEKGMGFGKLAAPLRTALAGRTVTPSVYDMMLVIGRDETIARLEDAAAA.

The 'HIGH' region signature appears at Pro15 to Gly25. A 'KMSKS' region motif is present at residues Lys243–Arg247. Lys246 serves as a coordination point for ATP.

It belongs to the class-I aminoacyl-tRNA synthetase family. Glutamate--tRNA ligase type 1 subfamily. Monomer.

It is found in the cytoplasm. The catalysed reaction is tRNA(Glu) + L-glutamate + ATP = L-glutamyl-tRNA(Glu) + AMP + diphosphate. In terms of biological role, catalyzes the attachment of glutamate to tRNA(Glu) in a two-step reaction: glutamate is first activated by ATP to form Glu-AMP and then transferred to the acceptor end of tRNA(Glu). This chain is Glutamate--tRNA ligase 1, found in Cereibacter sphaeroides (strain ATCC 17023 / DSM 158 / JCM 6121 / CCUG 31486 / LMG 2827 / NBRC 12203 / NCIMB 8253 / ATH 2.4.1.) (Rhodobacter sphaeroides).